Consider the following 284-residue polypeptide: NAD kinase (284 aa).

The active-site Proton acceptor is Asp-70. NAD(+) contacts are provided by residues 70–71 (DG), 139–140 (NE), Lys-167, Asp-169, Leu-177, 180–185 (TAYNLS), and Gln-236.

The protein belongs to the NAD kinase family. A divalent metal cation is required as a cofactor.

The protein localises to the cytoplasm. It carries out the reaction NAD(+) + ATP = ADP + NADP(+) + H(+). Involved in the regulation of the intracellular balance of NAD and NADP, and is a key enzyme in the biosynthesis of NADP. Catalyzes specifically the phosphorylation on 2'-hydroxyl of the adenosine moiety of NAD to yield NADP. The protein is NAD kinase of Helicobacter pylori (strain HPAG1).